We begin with the raw amino-acid sequence, 176 residues long: NAD(P)H-quinone oxidoreductase subunit I, chloroplastic (176 aa).

4Fe-4S ferredoxin-type domains follow at residues 55–84 and 95–124; these read GRIHFEFDKCIACEVCVRVCPIDLPVVDWE and LNYSIDFGICIFCGNCVEYCPTNCLSMTEE. Residues C64, C67, C70, C74, C104, C107, C110, and C114 each contribute to the [4Fe-4S] cluster site.

The protein belongs to the complex I 23 kDa subunit family. In terms of assembly, NDH is composed of at least 16 different subunits, 5 of which are encoded in the nucleus. [4Fe-4S] cluster serves as cofactor.

The protein resides in the plastid. The protein localises to the chloroplast thylakoid membrane. The enzyme catalyses a plastoquinone + NADH + (n+1) H(+)(in) = a plastoquinol + NAD(+) + n H(+)(out). It carries out the reaction a plastoquinone + NADPH + (n+1) H(+)(in) = a plastoquinol + NADP(+) + n H(+)(out). Its function is as follows. NDH shuttles electrons from NAD(P)H:plastoquinone, via FMN and iron-sulfur (Fe-S) centers, to quinones in the photosynthetic chain and possibly in a chloroplast respiratory chain. The immediate electron acceptor for the enzyme in this species is believed to be plastoquinone. Couples the redox reaction to proton translocation, and thus conserves the redox energy in a proton gradient. This Populus trichocarpa (Western balsam poplar) protein is NAD(P)H-quinone oxidoreductase subunit I, chloroplastic.